The primary structure comprises 120 residues: MFLSKLSIMNDSNSRCDCILSQKPIIFNDFNESITNTEYSGTNPVLNVKSIRKDRNLYRKIAHMNYWLQMVDIKLPDNLDIIETIEFLDNALELKGINQDDLIYKIGDIIVGLKISKKIE.

This is an uncharacterized protein from Acanthamoeba polyphaga mimivirus (APMV).